A 228-amino-acid polypeptide reads, in one-letter code: Aquaporin Z 2 (228 aa).

The next 2 helical transmembrane spans lie at 9-29 and 34-54; these read FFGT…AAAF and IGFT…AYAV. Residues 63–65 carry the NPA 1 motif; the sequence is NPA. A run of 3 helical transmembrane segments spans residues 82–102, 129–149, and 158–178; these read VPYV…LYVI, LVSA…VILG, and GFAP…SIPV. Positions 184–186 match the NPA 2 motif; the sequence is NPA. A helical transmembrane segment spans residues 204-224; that stretch reads WLFWLAPIVGGAAGAVIWKLF.

Belongs to the MIP/aquaporin (TC 1.A.8) family. In terms of assembly, homotetramer.

Its subcellular location is the cell inner membrane. It carries out the reaction H2O(in) = H2O(out). In terms of biological role, channel that permits osmotically driven movement of water in both directions. It is involved in the osmoregulation and in the maintenance of cell turgor during volume expansion in rapidly growing cells. It mediates rapid entry or exit of water in response to abrupt changes in osmolarity. The chain is Aquaporin Z 2 from Agrobacterium fabrum (strain C58 / ATCC 33970) (Agrobacterium tumefaciens (strain C58)).